Consider the following 66-residue polypeptide: Large ribosomal subunit protein bL33c (66 aa).

The protein belongs to the bacterial ribosomal protein bL33 family.

Its subcellular location is the plastid. It is found in the chloroplast. In Manihot esculenta (Cassava), this protein is Large ribosomal subunit protein bL33c.